A 204-amino-acid polypeptide reads, in one-letter code: Octanoyltransferase (204 aa).

The region spanning 27–202 is the BPL/LPL catalytic domain; the sequence is QGGEEALLLL…RFQPLLNLHL (176 aa). Residues 65 to 72, 132 to 134, and 145 to 147 contribute to the substrate site; these read RGGDVTYH, SIG, and GFA. Cys-163 serves as the catalytic Acyl-thioester intermediate.

This sequence belongs to the LipB family.

It localises to the cytoplasm. It catalyses the reaction octanoyl-[ACP] + L-lysyl-[protein] = N(6)-octanoyl-L-lysyl-[protein] + holo-[ACP] + H(+). The protein operates within protein modification; protein lipoylation via endogenous pathway; protein N(6)-(lipoyl)lysine from octanoyl-[acyl-carrier-protein]: step 1/2. Its function is as follows. Catalyzes the transfer of endogenously produced octanoic acid from octanoyl-acyl-carrier-protein onto the lipoyl domains of lipoate-dependent enzymes. Lipoyl-ACP can also act as a substrate although octanoyl-ACP is likely to be the physiological substrate. This chain is Octanoyltransferase, found in Citrifermentans bemidjiense (strain ATCC BAA-1014 / DSM 16622 / JCM 12645 / Bem) (Geobacter bemidjiensis).